The following is a 362-amino-acid chain: Phosphoserine aminotransferase (362 aa).

L-glutamate contacts are provided by Ser9 and Arg42. Pyridoxal 5'-phosphate-binding positions include 76-77 (GR), Trp102, Thr153, Asp174, and Gln197. Residue Lys198 is modified to N6-(pyridoxal phosphate)lysine. 239-240 (NT) serves as a coordination point for pyridoxal 5'-phosphate.

The protein belongs to the class-V pyridoxal-phosphate-dependent aminotransferase family. SerC subfamily. Homodimer. It depends on pyridoxal 5'-phosphate as a cofactor.

It localises to the cytoplasm. The enzyme catalyses O-phospho-L-serine + 2-oxoglutarate = 3-phosphooxypyruvate + L-glutamate. It catalyses the reaction 4-(phosphooxy)-L-threonine + 2-oxoglutarate = (R)-3-hydroxy-2-oxo-4-phosphooxybutanoate + L-glutamate. Its pathway is amino-acid biosynthesis; L-serine biosynthesis; L-serine from 3-phospho-D-glycerate: step 2/3. The protein operates within cofactor biosynthesis; pyridoxine 5'-phosphate biosynthesis; pyridoxine 5'-phosphate from D-erythrose 4-phosphate: step 3/5. Functionally, catalyzes the reversible conversion of 3-phosphohydroxypyruvate to phosphoserine and of 3-hydroxy-2-oxo-4-phosphonooxybutanoate to phosphohydroxythreonine. The protein is Phosphoserine aminotransferase of Salmonella choleraesuis (strain SC-B67).